A 367-amino-acid polypeptide reads, in one-letter code: 15-cis-zeta-carotene isomerase, chloroplastic (367 aa).

Residues 1–58 constitute a chloroplast transit peptide; the sequence is MAVYHLLLSSPPSLLLLPPSPRRPNLTLIRRIPAHPRLGNSTSLLSSSSPVIRKILVR. 6 consecutive transmembrane segments (helical) span residues 95–115, 137–157, 172–192, 211–231, 269–289, and 339–359; these read SWVY…VVWI, EVAM…LASL, VLFA…FINH, AIWV…FNLL, LWIG…HHLF, and LPYL…PLMQ.

As to expression, expressed in leaves and at lower levels in roots.

It localises to the plastid. Its subcellular location is the chloroplast membrane. The catalysed reaction is 9,9',15-tri-cis-zeta-carotene = 9,9'-di-cis-zeta-carotene. Its function is as follows. Isomerase involved in the biosynthesis of carotenoids. Catalyzes the cis- to trans-conversion of the 15-cis-bond in 9,15,9'-tri-cis-zeta-carotene. This chain is 15-cis-zeta-carotene isomerase, chloroplastic (Z-ISO), found in Arabidopsis thaliana (Mouse-ear cress).